The following is a 303-amino-acid chain: Glycine betaine/carnitine/choline-binding protein OpuCC (303 aa).

An N-terminal signal peptide occupies residues 1 to 20 (MTKIKWLGAFALVFVMLLGG). Cysteine 21 carries N-palmitoyl cysteine lipidation. Cysteine 21 carries the S-diacylglycerol cysteine lipid modification.

This sequence belongs to the OsmX family. The complex is composed of two ATP-binding proteins (OpuCA), two transmembrane proteins (OpuCB and OpuCD) and a solute-binding protein (OpuCC).

It is found in the cell membrane. Member of a high affinity multicomponent binding-protein-dependent transport system for glycine betaine, carnitine, and choline. This Bacillus subtilis (strain 168) protein is Glycine betaine/carnitine/choline-binding protein OpuCC (opuCC).